A 474-amino-acid chain; its full sequence is Probable aspartate--tRNA ligase, cytoplasmic (474 aa).

Position 203 (Glu203) interacts with L-aspartate. Residues 225–228 (QLYK) are aspartate. L-aspartate is bound at residue Arg247. ATP is bound by residues 247–249 (RAE), 255–257 (RYL), and Glu397. L-aspartate-binding residues include Ser400 and Arg404. Position 445 to 448 (445 to 448 (GLER)) interacts with ATP.

This sequence belongs to the class-II aminoacyl-tRNA synthetase family. Type 2 subfamily. In terms of assembly, homodimer.

It is found in the cytoplasm. It catalyses the reaction tRNA(Asp) + L-aspartate + ATP = L-aspartyl-tRNA(Asp) + AMP + diphosphate. The sequence is that of Probable aspartate--tRNA ligase, cytoplasmic from Enterocytozoon bieneusi (strain H348) (Microsporidian parasite).